The chain runs to 185 residues: Elongation factor P (185 aa).

Belongs to the elongation factor P family.

The protein resides in the cytoplasm. Its pathway is protein biosynthesis; polypeptide chain elongation. In terms of biological role, involved in peptide bond synthesis. Stimulates efficient translation and peptide-bond synthesis on native or reconstituted 70S ribosomes in vitro. Probably functions indirectly by altering the affinity of the ribosome for aminoacyl-tRNA, thus increasing their reactivity as acceptors for peptidyl transferase. The sequence is that of Elongation factor P from Burkholderia ambifaria (strain MC40-6).